A 318-amino-acid chain; its full sequence is Oncosphere antigen A (318 aa).

Fibronectin type-III domains are found at residues 6–103, 109–207, and 211–308; these read IPQN…TPLP, KPSF…ISRA, and VPQN…TPSV.

In Hydatigena taeniaeformis (Feline tapeworm), this protein is Oncosphere antigen A (ONCA).